A 179-amino-acid polypeptide reads, in one-letter code: Large ribosomal subunit protein uL5 (179 aa).

The protein belongs to the universal ribosomal protein uL5 family. Part of the 50S ribosomal subunit; part of the 5S rRNA/L5/L18/L25 subcomplex. Contacts the 5S rRNA and the P site tRNA. Forms a bridge to the 30S subunit in the 70S ribosome.

In terms of biological role, this is one of the proteins that bind and probably mediate the attachment of the 5S RNA into the large ribosomal subunit, where it forms part of the central protuberance. In the 70S ribosome it contacts protein S13 of the 30S subunit (bridge B1b), connecting the 2 subunits; this bridge is implicated in subunit movement. Contacts the P site tRNA; the 5S rRNA and some of its associated proteins might help stabilize positioning of ribosome-bound tRNAs. In Polaromonas naphthalenivorans (strain CJ2), this protein is Large ribosomal subunit protein uL5.